A 122-amino-acid polypeptide reads, in one-letter code: Large ribosomal subunit protein uL14 (122 aa).

This sequence belongs to the universal ribosomal protein uL14 family. As to quaternary structure, part of the 50S ribosomal subunit. Forms a cluster with proteins L3 and L19. In the 70S ribosome, L14 and L19 interact and together make contacts with the 16S rRNA in bridges B5 and B8.

Functionally, binds to 23S rRNA. Forms part of two intersubunit bridges in the 70S ribosome. The chain is Large ribosomal subunit protein uL14 from Pelobacter propionicus (strain DSM 2379 / NBRC 103807 / OttBd1).